The chain runs to 344 residues: Protease HtpX homolog (344 aa).

A run of 3 helical transmembrane segments spans residues 8 to 28 (VALGLYMLGYLFMFVIAATVA), 46 to 66 (ALTGVMIVLTTAFVIYLFVLV), and 74 to 94 (VSFLVGLIAFVVLMNLLTYVA). Histidine 172 contacts Zn(2+). The active site involves glutamate 173. Histidine 176 provides a ligand contact to Zn(2+). 2 helical membrane passes run 183–203 (AIMLLFGVLPSVVYYLGVTAV) and 220–240 (LAVGVVAVLASFLIQLLVLAF). Glutamate 245 provides a ligand contact to Zn(2+).

The protein belongs to the peptidase M48B family. It depends on Zn(2+) as a cofactor.

The protein resides in the cell membrane. The sequence is that of Protease HtpX homolog from Pyrobaculum calidifontis (strain DSM 21063 / JCM 11548 / VA1).